Consider the following 376-residue polypeptide: Protein-glutamate methylesterase/protein-glutamine glutaminase 1 (376 aa).

One can recognise a Response regulatory domain in the interval 4–121; the sequence is KVLVVDDSSF…ARNRDEAVSL (118 aa). 4-aspartylphosphate is present on Asp-55. The tract at residues 138–174 is disordered; sequence RPVASSTPVQERPQSTLNRPTTGLRREAPAQAPVSRA. Residues 141-158 are compositionally biased toward polar residues; the sequence is ASSTPVQERPQSTLNRPT. A CheB-type methylesterase domain is found at 183–376; sequence SGKKYQLTAI…ERMLVEVGLA (194 aa). Residues Ser-195, His-222, and Asp-318 contribute to the active site.

It belongs to the CheB family. Post-translationally, phosphorylated by CheA. Phosphorylation of the N-terminal regulatory domain activates the methylesterase activity.

The protein resides in the cytoplasm. It catalyses the reaction [protein]-L-glutamate 5-O-methyl ester + H2O = L-glutamyl-[protein] + methanol + H(+). The enzyme catalyses L-glutaminyl-[protein] + H2O = L-glutamyl-[protein] + NH4(+). In terms of biological role, involved in chemotaxis. Part of a chemotaxis signal transduction system that modulates chemotaxis in response to various stimuli. Catalyzes the demethylation of specific methylglutamate residues introduced into the chemoreceptors (methyl-accepting chemotaxis proteins or MCP) by CheR. Also mediates the irreversible deamidation of specific glutamine residues to glutamic acid. This is Protein-glutamate methylesterase/protein-glutamine glutaminase 1 from Vibrio vulnificus (strain CMCP6).